A 117-amino-acid polypeptide reads, in one-letter code: Large ribosomal subunit protein bL20c (117 aa).

Belongs to the bacterial ribosomal protein bL20 family.

Its subcellular location is the plastid. It localises to the chloroplast. Its function is as follows. Binds directly to 23S ribosomal RNA and is necessary for the in vitro assembly process of the 50S ribosomal subunit. It is not involved in the protein synthesizing functions of that subunit. The polypeptide is Large ribosomal subunit protein bL20c (Acorus gramineus (Dwarf sweet flag)).